A 970-amino-acid polypeptide reads, in one-letter code: GEM-interacting protein (970 aa).

S19 carries the phosphoserine modification. 3 disordered regions span residues P44–V76, S224–K263, and P377–L478. Residues P56–S65 show a composition bias toward polar residues. Phosphoserine occurs at positions 71, 231, 234, 243, 437, and 441. An F-BAR domain is found at E81–R344. Residues S231 to P246 are compositionally biased toward polar residues. The segment covering S459 to D472 has biased composition (acidic residues). Residues T493 to C537 form a Phorbol-ester/DAG-type zinc finger. One can recognise a Rho-GAP domain in the interval L554–F757. Phosphothreonine is present on T660. The segment at L762–R878 is disordered. A compositionally biased stretch (pro residues) spans T766 to G778. Polar residues predominate over residues E815–S830. A compositionally biased stretch (basic and acidic residues) spans D831–G844. Polar residues predominate over residues V847 to G863. S885, S907, S914, S919, and S923 each carry phosphoserine. The tract at residues E897 to K932 is disordered. Residues G910 to S923 show a composition bias toward low complexity.

In terms of assembly, interacts with GEM through its N-terminal.

Its function is as follows. Stimulates, in vitro and in vivo, the GTPase activity of RhoA. In Homo sapiens (Human), this protein is GEM-interacting protein (GMIP).